Consider the following 128-residue polypeptide: Prefoldin subunit 1 (128 aa).

Coiled-coil stretches lie at residues 17 to 37 (MIEL…KEGD) and 81 to 115 (LKDS…LLQQ).

It belongs to the prefoldin subunit beta family. As to quaternary structure, heterohexamer of two PFD-alpha type and four PFD-beta type subunits forming prefoldin co-chaperone complex. Interacts with LSM8, a specific subunit of the LSM2-8 complex, which is a core component of the spliceosome.

The protein resides in the cytoplasm. Its subcellular location is the nucleus. In terms of biological role, binds specifically to cytosolic chaperonin (c-CPN) and transfers target proteins to it. Binds to nascent polypeptide chain and promotes folding in an environment in which there are many competing pathways for nonnative proteins. Together with other chaperonins, contribute to the regulation of gene expression by modulating the spliceosome function on pre-mRNA splicing post-transcriptionally by acting as a co-chaperone of Hsp90 to control levels of LSM8. Required for microtubules (MTs) organization and dynamicity. Involved in the process leading to microtubules dissociation in response to gibberellic acid (GA) probably due to the DELLA proteins-mediated translocation of the prefoldin co-chaperone complex from the cytoplasm to the nucleus. The chain is Prefoldin subunit 1 from Arabidopsis thaliana (Mouse-ear cress).